An 873-amino-acid chain; its full sequence is V-type proton ATPase 116 kDa subunit a 2 (873 aa).

Topologically, residues 1–407 (MGSLSRSEEM…TIITFPFLFS (407 aa)) are cytoplasmic. The chain crosses the membrane as a helical span at residues 408 to 428 (CMFGDLGHGCIMLMAGLWFVL). The Lumenal portion of the chain corresponds to 429–445 (REKNLQARNIKDEIFNM). The chain crosses the membrane as a helical span at residues 446–466 (FFGGRYIILLMGLFSIHAGII). At 467-543 (YNDMFAKSFN…NKLNFLNSMK (77 aa)) the chain is on the cytoplasmic side. The helical transmembrane segment at 544-564 (MKLSVILGISQMTFGVILSFF) threads the bilayer. N-linked (GlcNAc...) asparagine glycosylation is found at Asn565 and Asn569. Over 565-574 (NHTYNKSKID) the chain is Lumenal. Residues 575-595 (IFTVFIPQMLFMGCIFMYLCL) form a helical membrane-spanning segment. The Cytoplasmic portion of the chain corresponds to 596 to 614 (QIILKWLFFWTKEATVFGQ). The helical transmembrane segment at 615–635 (IYPGSHCAPSLLIGLINMFMM) threads the bilayer. Over 636–668 (KDRNAGFVVDGGKVNGEYREVETCYLSQWYPGQ) the chain is Lumenal. Residues 669 to 689 (SVIEMILVVIAVICVPVMLFG) form a helical membrane-spanning segment. Over 690-785 (KPIHHVMQQK…LWALSLAHAQ (96 aa)) the chain is Cytoplasmic. A helical membrane pass occupies residues 786–806 (LSEVLWHMVFVTGGLGISGTA). Gly807 is a topological domain (lumenal). Residues 808-828 (FIAVYVVFFIFFVLTISILVL) form a helical membrane-spanning segment. At 829-873 (MEGLSAFLHTLRLHWVEFQSKFYLGLGYPFVPYSFKTALQEAEAA) the chain is on the cytoplasmic side.

Belongs to the V-ATPase 116 kDa subunit family. In terms of assembly, V-ATPase is a heteromultimeric enzyme made up of two complexes: the ATP-hydrolytic V1 complex and the proton translocation V0 complex. The V1 complex consists of three catalytic AB heterodimers that form a heterohexamer, three peripheral stalks each consisting of EG heterodimers, one central rotor including subunits D and F, and the regulatory subunits C and H. The proton translocation complex V0 consists of the proton transport subunit a, a ring of proteolipid subunits c9c'', rotary subunit d, subunits e and f, and the accessory subunits vah-19/Ac45 and vah-20/PRR. Interacts with V-type proton ATPase subunit C vha-11. As to expression, expressed in the H-shaped excretory cell (at protein level). Expressed in hypodermal cells around the vulva. Expressed in the main epidermal syncytium. Expressed in the sheath cells associated with head and tail sensory organs; specifically, expressed in the apical sheath cells of the amphids and CEP neuron and in the sheath cells of the OLQ sensory organ.

It is found in the apical cell membrane. The protein localises to the endosome. Its subcellular location is the multivesicular body membrane. Functionally, subunit of the V0 complex of vacuolar(H+)-ATPase (V-ATPase), a multisubunit enzyme composed of a peripheral complex (V1) that hydrolyzes ATP and a membrane integral complex (V0) that translocates protons. V-ATPase is responsible for acidifying and maintaining the pH of intracellular compartments and in some cell types, is targeted to the plasma membrane, where it is responsible for acidifying the extracellular environment. Involved in the assembly of the V-ATPase complex. The V-ATPase is required for the function of the excretory canal. Independently of the V1 complex, the V0 complex of the V-ATPase is required for multivesicular body membrane fusion with the apical membrane of the epidermal cells during exosome release and thus regulates the release of cuticle components such as Hedgehog-related peptide wrt-2 but not collagen. Also, in the epidermis, regulates the trafficking of che-14 and rdy-2. Regulates the secretion of granular material found in the amphid channel and in controlling osmoregulation in the amphid pocket. The chain is V-type proton ATPase 116 kDa subunit a 2 from Caenorhabditis elegans.